A 545-amino-acid chain; its full sequence is Degenerin-like protein asic-2 (545 aa).

The Cytoplasmic portion of the chain corresponds to 1–34 (MRGGGFVQIFKDFSNWSTVAVVPHVANANNKISR). Residues 35 to 55 (IFWIAIFLFVLGMFAYELYIL) form a helical membrane-spanning segment. Residues 56–457 (IAKFFSYPAT…NVINDLGGQA (402 aa)) are Extracellular-facing. The cysteines at positions 83 and 191 are disulfide-linked. N-linked (GlcNAc...) asparagine glycosylation is present at Asn-201. 5 cysteine pairs are disulfide-bonded: Cys-284/Cys-370, Cys-305/Cys-366, Cys-309/Cys-364, Cys-318/Cys-343, and Cys-320/Cys-334. The N-linked (GlcNAc...) asparagine glycan is linked to Asn-350. A helical membrane pass occupies residues 458-478 (GLWLGLSVISVVEMTGLMLVM). The GAS motif; ion selectivity filter motif lies at 462 to 464 (GLS). Residues 479–545 (GAFCVTGGAI…NKGDEEKKKK (67 aa)) lie on the Cytoplasmic side of the membrane. Basic and acidic residues-rich tracts occupy residues 514–523 (DHLEKKHGEM) and 534–545 (IENKGDEEKKKK). The disordered stretch occupies residues 514–545 (DHLEKKHGEMESGSDGEVDDIENKGDEEKKKK).

This sequence belongs to the amiloride-sensitive sodium channel (TC 1.A.6) family. In terms of assembly, can form homotrimers. Heterotrimer; forms functional heterotrimers producing channel with different properties.

It is found in the cell membrane. The enzyme catalyses Na(+)(in) = Na(+)(out). With respect to regulation, inhibited by the diuretic drug amiloride. Its function is as follows. Could form pH-gated heterotrimeric sodium channels that act as postsynaptic excitatory sensors in the nervous system, generating rapid, transient inward currents that fully desensitize upon extracellular acidification. The chain is Degenerin-like protein asic-2 (asic-2) from Caenorhabditis elegans.